A 139-amino-acid chain; its full sequence is Phosphoribosyl-AMP cyclohydrolase (139 aa).

A Mg(2+)-binding site is contributed by D92. C93 is a binding site for Zn(2+). Residues D94 and D96 each contribute to the Mg(2+) site. Zn(2+) is bound by residues C111 and C118.

This sequence belongs to the PRA-CH family. In terms of assembly, homodimer. Mg(2+) serves as cofactor. The cofactor is Zn(2+).

The protein resides in the cytoplasm. The enzyme catalyses 1-(5-phospho-beta-D-ribosyl)-5'-AMP + H2O = 1-(5-phospho-beta-D-ribosyl)-5-[(5-phospho-beta-D-ribosylamino)methylideneamino]imidazole-4-carboxamide. The protein operates within amino-acid biosynthesis; L-histidine biosynthesis; L-histidine from 5-phospho-alpha-D-ribose 1-diphosphate: step 3/9. Functionally, catalyzes the hydrolysis of the adenine ring of phosphoribosyl-AMP. The chain is Phosphoribosyl-AMP cyclohydrolase from Caulobacter vibrioides (strain ATCC 19089 / CIP 103742 / CB 15) (Caulobacter crescentus).